Consider the following 382-residue polypeptide: Beta-1,4-galactosyltransferase 6 (382 aa).

Residues 1–14 (MSVLRRMMRVSNRS) are Cytoplasmic-facing. A helical; Signal-anchor for type II membrane protein transmembrane segment spans residues 15-35 (LLAFIFFFSLSSSCLYFIYVA). The Lumenal portion of the chain corresponds to 36–382 (PGIANTYLFM…MPELAPIEDY (347 aa)). 6 N-linked (GlcNAc...) asparagine glycosylation sites follow: Asn71, Asn75, Asn83, Asn84, Asn99, and Asn122. Cys108 and Cys152 are disulfide-bonded. Residues 163–167 (PFRNR), 202–204 (FNR), 229–230 (VD), Tyr258, and Trp290 each bind UDP-alpha-D-galactose. A disulfide bridge links Cys223 with Cys242. A Mn(2+)-binding site is contributed by Asp230. 292–295 (GEDD) provides a ligand contact to N-acetyl-D-glucosamine. Asn307 carries an N-linked (GlcNAc...) asparagine glycan. His323 contributes to the Mn(2+) binding site. 323–324 (HH) serves as a coordination point for UDP-alpha-D-galactose. Arg334 lines the N-acetyl-D-glucosamine pocket. A glycan (N-linked (GlcNAc...) asparagine) is linked at Asn367.

It belongs to the glycosyltransferase 7 family. The cofactor is Mn(2+). Mg(2+) is required as a cofactor. As to expression, high expression in brain and adrenal gland, lower in liver, lung, colon and peripheral white blood cells.

Its subcellular location is the golgi apparatus. It is found in the golgi stack membrane. The enzyme catalyses a beta-D-glucosyl-(1&lt;-&gt;1')-N-acylsphing-4-enine + UDP-alpha-D-galactose = a beta-D-Gal-(1-&gt;4)-beta-D-Glc-(1&lt;-&gt;1)-Cer(d18:1(4E)) + UDP + H(+). It functions in the pathway protein modification; protein glycosylation. The protein operates within sphingolipid metabolism. With respect to regulation, inhibited by EDTA. Its function is as follows. Catalyzes the synthesis of lactosylceramide (LacCer) via the transfer of galactose from UDP-galactose to glucosylceramide (GlcCer). LacCer is the starting point in the biosynthesis of all gangliosides (membrane-bound glycosphingolipids) which play pivotal roles in the CNS including neuronal maturation and axonal and myelin formation. This is Beta-1,4-galactosyltransferase 6 from Homo sapiens (Human).